The sequence spans 31 residues: Superoxide dismutase [Cu-Zn] (31 aa).

This sequence belongs to the Cu-Zn superoxide dismutase family. Cu cation serves as cofactor. Zn(2+) is required as a cofactor.

The protein resides in the cytoplasm. It carries out the reaction 2 superoxide + 2 H(+) = H2O2 + O2. Functionally, destroys radicals which are normally produced within the cells and which are toxic to biological systems. This is Superoxide dismutase [Cu-Zn] from Striga hermonthica (Purple witchweed).